The chain runs to 311 residues: Methionyl-tRNA formyltransferase (311 aa).

A (6S)-5,6,7,8-tetrahydrofolate-binding site is contributed by 109–112; it reads SLLP.

The protein belongs to the Fmt family.

The enzyme catalyses L-methionyl-tRNA(fMet) + (6R)-10-formyltetrahydrofolate = N-formyl-L-methionyl-tRNA(fMet) + (6S)-5,6,7,8-tetrahydrofolate + H(+). Functionally, attaches a formyl group to the free amino group of methionyl-tRNA(fMet). The formyl group appears to play a dual role in the initiator identity of N-formylmethionyl-tRNA by promoting its recognition by IF2 and preventing the misappropriation of this tRNA by the elongation apparatus. This Kosmotoga olearia (strain ATCC BAA-1733 / DSM 21960 / TBF 19.5.1) protein is Methionyl-tRNA formyltransferase.